Reading from the N-terminus, the 160-residue chain is Transmembrane protein 220 (160 aa).

Helical transmembrane passes span 3-23 (PALW…AALV), 30-50 (AEVW…VGLN), 62-82 (ISAI…SYLL), 100-120 (GLVI…NPVG), and 125-145 (LAIA…IYIN).

It is found in the membrane. The chain is Transmembrane protein 220 (TMEM220) from Homo sapiens (Human).